The primary structure comprises 155 residues: 6,7-dimethyl-8-ribityllumazine synthase (155 aa).

5-amino-6-(D-ribitylamino)uracil-binding positions include phenylalanine 23, 57–59, and 81–83; these read AFE and AVI. 86-87 provides a ligand contact to (2S)-2-hydroxy-3-oxobutyl phosphate; it reads AT. Histidine 89 functions as the Proton donor in the catalytic mechanism. Residue phenylalanine 114 coordinates 5-amino-6-(D-ribitylamino)uracil. Arginine 128 provides a ligand contact to (2S)-2-hydroxy-3-oxobutyl phosphate.

The protein belongs to the DMRL synthase family.

The enzyme catalyses (2S)-2-hydroxy-3-oxobutyl phosphate + 5-amino-6-(D-ribitylamino)uracil = 6,7-dimethyl-8-(1-D-ribityl)lumazine + phosphate + 2 H2O + H(+). It functions in the pathway cofactor biosynthesis; riboflavin biosynthesis; riboflavin from 2-hydroxy-3-oxobutyl phosphate and 5-amino-6-(D-ribitylamino)uracil: step 1/2. In terms of biological role, catalyzes the formation of 6,7-dimethyl-8-ribityllumazine by condensation of 5-amino-6-(D-ribitylamino)uracil with 3,4-dihydroxy-2-butanone 4-phosphate. This is the penultimate step in the biosynthesis of riboflavin. In Geotalea daltonii (strain DSM 22248 / JCM 15807 / FRC-32) (Geobacter daltonii), this protein is 6,7-dimethyl-8-ribityllumazine synthase.